The sequence spans 352 residues: Membrane progestin receptor alpha (352 aa).

The Cytoplasmic portion of the chain corresponds to 1–75 (MATVVMEQIG…FLTLFQRHNE (75 aa)). The chain crosses the membrane as a helical span at residues 76 to 96 (TLNVWTHLLAAFIILVKWQEI). Residues 97–110 (SETVDFLRDPHAQP) lie on the Extracellular side of the membrane. A helical membrane pass occupies residues 111–131 (LFIVLLAAFTYLSFSALAHLL). At 132–139 (SAKSELSY) the chain is on the cytoplasmic side. A helical transmembrane segment spans residues 140–160 (YTFYFLDYVGVAVYQYGSALA). Residues 161–175 (HYYYAIEKEWHTKVQ) lie on the Extracellular side of the membrane. A helical membrane pass occupies residues 176–196 (GLFLPAAAFLAWLTCFGCCYG). Residues 197-242 (KYASPELPKVANKLFQVVPSALAYCLDISPVVHRIYSCYQEGCSDP) are Cytoplasmic-facing. The helical transmembrane segment at 243–263 (VVAYHFYHVVFFLIGAYFFCC) threads the bilayer. Topologically, residues 264–275 (PHPESLFPGKCD) are extracellular. The helical transmembrane segment at 276 to 296 (FIGQGHQLFHVFVVVCTLTQV) threads the bilayer. At 297 to 316 (EALRTDFTERRPFYERLHGD) the chain is on the cytoplasmic side. A helical transmembrane segment spans residues 317 to 337 (LAHDAVALFIFTACCSALTAF). Residues 338–352 (YVRQRVRASLHEKGE) are Extracellular-facing.

This sequence belongs to the ADIPOR family. Strongly expressed in ovary and brain; lower expression in testis and pituitary. Not detected in heart, kidney, spleen, intestine, gill and muscle.

It is found in the cell membrane. In terms of biological role, steroid membrane receptor. Binds progesterone, progestin and 17-hydroxyprogesterone in vitro. Capable of mediating progestin-induced oocyte maturation. The chain is Membrane progestin receptor alpha (mpra) from Cynoscion nebulosus (Spotted seatrout).